Consider the following 316-residue polypeptide: HTH-type transcriptional regulator PecT (316 aa).

The HTH lysR-type domain maps to Leu-11–Thr-68. Positions Phe-28–Gln-47 form a DNA-binding region, H-T-H motif. Residues Leu-293–Thr-316 form a disordered region. Basic and acidic residues predominate over residues Ser-301–Thr-316.

It belongs to the LysR transcriptional regulatory family.

Regulates pectinase gene expression. This Dickeya dadantii (strain 3937) (Erwinia chrysanthemi (strain 3937)) protein is HTH-type transcriptional regulator PecT (pecT).